The following is a 152-amino-acid chain: Sulfur-rich protein (152 aa).

The segment covering 1–11 (MSTTPIVSGVT) has biased composition (polar residues). Residues 1-21 (MSTTPIVSGVTSQNNSSENVS) form a disordered region. Residues 12–21 (SQNNSSENVS) show a composition bias toward low complexity. Helical transmembrane passes span 44–64 (VGLA…LFIL) and 73–93 (IYLA…ILSM).

The protein resides in the membrane. This chain is Sulfur-rich protein (srp), found in Chlamydia muridarum (strain MoPn / Nigg).